Reading from the N-terminus, the 482-residue chain is Early growth response protein 4 (482 aa).

The tract at residues D274–R357 is disordered. Residues E280–S290 are compositionally biased toward low complexity. Positions G291–F302 are enriched in gly residues. Residues P337–P349 show a composition bias toward pro residues. 3 C2H2-type zinc fingers span residues F376–H400, F406–H428, and F434–H456.

Belongs to the EGR C2H2-type zinc-finger protein family. Expressed in brain. In the cerebellum and frontal cortex.

The protein localises to the nucleus. Transcriptional regulator. Recognizes and binds to the DNA sequence 5'-GCGGGGGCG-3' (GSG). Activates the transcription of target genes whose products are required for mitogenesis and differentiation. This chain is Early growth response protein 4 (EGR4), found in Bos taurus (Bovine).